Consider the following 20-residue polypeptide: Octopamine receptor (20 aa).

The protein belongs to the G-protein coupled receptor 1 family.

It is found in the cell membrane. Putative receptor for octopamine. Octopamine (OA) is a neurotransmitter, neurohormone, and neuromodulator in invertebrates. The activity of this receptor is mediated by G proteins which activate adenylyl cyclase. This chain is Octopamine receptor, found in Photinus pyralis (Common eastern firefly).